The chain runs to 285 residues: 3-methyl-2-oxobutanoate hydroxymethyltransferase (285 aa).

Positions M1–T23 are disordered. Positions A9 to P21 are enriched in low complexity. Residues D66 and D105 each contribute to the Mg(2+) site. 3-methyl-2-oxobutanoate is bound by residues D66–S67, D105, and K135. E137 is a Mg(2+) binding site. E203 serves as the catalytic Proton acceptor.

This sequence belongs to the PanB family. In terms of assembly, homodecamer; pentamer of dimers. Mg(2+) serves as cofactor.

It is found in the cytoplasm. It catalyses the reaction 3-methyl-2-oxobutanoate + (6R)-5,10-methylene-5,6,7,8-tetrahydrofolate + H2O = 2-dehydropantoate + (6S)-5,6,7,8-tetrahydrofolate. It participates in cofactor biosynthesis; (R)-pantothenate biosynthesis; (R)-pantoate from 3-methyl-2-oxobutanoate: step 1/2. Its function is as follows. Catalyzes the reversible reaction in which hydroxymethyl group from 5,10-methylenetetrahydrofolate is transferred onto alpha-ketoisovalerate to form ketopantoate. This Mycobacterium avium (strain 104) protein is 3-methyl-2-oxobutanoate hydroxymethyltransferase.